The chain runs to 329 residues: MARRFLLEFEKPLVELENQIDQIRELARDSEVDVSQQLLQLETLAARRREEIFHALTPAQKIQVARHPQRPSTLDYIQMFCDDWVELHGDRNGTDDQALIGGLARIGEKSVLLIGQQKGRDTKENVARNFGMAKPGGYRKALRLMDHADRFNLPIISFIDTPGAYAGLIAEEQGQGEAIAVNLREMFRLTVPIIATVIGEGGSGGALGIGVADRLLMFEHSVYTVASPEACASILWRDAGKAPEAASALKITGPDLMKLGIVDEVLKEPSGGNNWAPLQAGDTLKNALEKHLSELLALSPDELRNNRYSKFRKMGKYLESQSIESEISV.

The CoA carboxyltransferase C-terminal domain occupies 40–294 (QLETLAARRR…KNALEKHLSE (255 aa)).

The protein belongs to the AccA family. In terms of assembly, acetyl-CoA carboxylase is a heterohexamer composed of biotin carboxyl carrier protein (AccB), biotin carboxylase (AccC) and two subunits each of ACCase subunit alpha (AccA) and ACCase subunit beta (AccD).

Its subcellular location is the cytoplasm. It carries out the reaction N(6)-carboxybiotinyl-L-lysyl-[protein] + acetyl-CoA = N(6)-biotinyl-L-lysyl-[protein] + malonyl-CoA. It functions in the pathway lipid metabolism; malonyl-CoA biosynthesis; malonyl-CoA from acetyl-CoA: step 1/1. Its function is as follows. Component of the acetyl coenzyme A carboxylase (ACC) complex. First, biotin carboxylase catalyzes the carboxylation of biotin on its carrier protein (BCCP) and then the CO(2) group is transferred by the carboxyltransferase to acetyl-CoA to form malonyl-CoA. This Prochlorococcus marinus (strain NATL1A) protein is Acetyl-coenzyme A carboxylase carboxyl transferase subunit alpha.